Consider the following 1053-residue polypeptide: DIS3-like exonuclease 1 (1053 aa).

The 75-residue stretch at 236-310 (AGIKSGRYIQ…KSEWKGRTAA (75 aa)) folds into the CSD1 domain. The tract at residues 306-332 (GRTAALGENDSDDKASGESPSEPMPTG) is disordered. In terms of domain architecture, CSD2 spans 365-431 (ILVTPWDYRI…GEIATILVEN (67 aa)). The RNB domain occupies 465 to 816 (RKDLRTTHLV…VHRLLMAAIS (352 aa)). Ser-989 is modified (phosphoserine).

Belongs to the RNR ribonuclease family. As to quaternary structure, component of the RNA exosome complex. The catalytically inactive RNA exosome core (Exo-9) complex is believed to associate with catalytic subunits EXOSC10, and DIS3 or DIS3L in cytoplasmic- and nuclear-specific RNA exosome complex forms. Mg(2+) serves as cofactor.

It is found in the cytoplasm. The enzyme catalyses Exonucleolytic cleavage in the 3'- to 5'-direction to yield nucleoside 5'-phosphates.. Catalytic component of the RNA exosome complex which has 3'-&gt;5' exoribonuclease activity and participates in a multitude of cellular RNA processing and degradation events. In the cytoplasm, the RNA exosome complex is involved in general mRNA turnover and specifically degrades inherently unstable mRNAs containing AU-rich elements (AREs) within their 3' untranslated regions, and in RNA surveillance pathways, preventing translation of aberrant mRNAs. It seems to be involved in degradation of histone mRNA. In Mus musculus (Mouse), this protein is DIS3-like exonuclease 1 (Dis3l).